The chain runs to 216 residues: MALSEAAVKVQAALLERGLETPMLPSVYSSEERKDKIEHHMKEILTLMSLDLSDDSLADTPRRIAKMYVDEIFSGLDYANFPKITVIDNKMGFDEMVRVQDISLTSTCEHHLVTIDGTATIAYLPRKKIIGLSKINRIVRFFAQRPQVQERLTQQVLVALQTLLETKDVAVKMDAVHYCVKSRGVMDSTSSTTTTALGGIFKSNPATRAEFLHQSK.

The Zn(2+) site is built by C108, H111, and C179.

It belongs to the GTP cyclohydrolase I family. Homomer.

It catalyses the reaction GTP + H2O = 7,8-dihydroneopterin 3'-triphosphate + formate + H(+). It participates in cofactor biosynthesis; 7,8-dihydroneopterin triphosphate biosynthesis; 7,8-dihydroneopterin triphosphate from GTP: step 1/1. This is GTP cyclohydrolase 1 from Shewanella baltica (strain OS223).